The chain runs to 671 residues: Heat shock transcription factor hsf-1 (671 aa).

2 stretches are compositionally biased toward low complexity: residues 1 to 17 (MQPT…QQQQ) and 38 to 52 (QQAP…NHQN). Residues 1 to 61 (MQPTGNQIQQ…NGAIGGKKSS (61 aa)) are disordered. Residues 89-196 (LPVFLIKLWN…LLSQIKRKQS (108 aa)) form a DNA-binding domain region. The stretch at 206 to 240 (NEQTQQNLEVVMAEMRAMREKAKNMEDKMNKLTKE) forms a coiled coil. Disordered regions lie at residues 329–423 (QEPF…PLTH), 437–493 (YQGA…VNNY), 526–552 (HHPT…GLSP), and 612–671 (NAPE…PNLV). Residues 370-386 (GAQSSRYSDGGATSSRE) are compositionally biased toward polar residues. The span at 439–456 (GASPASGGPSTSSSAPSG) shows a compositional bias: low complexity. Composition is skewed to polar residues over residues 474–493 (ATRQ…VNNY) and 528–552 (PTTS…GLSP).

The protein belongs to the HSF family. In terms of assembly, forms homodimers and homotrimers. Component of the DHIC (ddl-1-containing hsf-1 inhibitory complex), which contains at least ddl-1, ddl-2, hsb-1 and hsf-1. Within the complex, interacts with ddl-1. Formation of the DHIC may be dependent upon the Insulin/IGF-1-like signaling (IIS) mediated pathway. In terms of processing, phosphorylated. Sumoylated. Sumoylation may inhibit transcriptional activity in response to heat shock. In terms of tissue distribution, expressed in intestinal cells, body wall muscle cells, and hypodermal cells, as well as many neurons in the head and tail.

Its subcellular location is the nucleus. The protein resides in the cytoplasm. Functionally, functions as a stress-inducible and DNA-binding transcription factor, playing a central role in the transcriptional activation of the heat shock response (HSR), leading to the expression of a large class of molecular chaperones, heat shock proteins (HSPs), that protect cells from cellular insult damage. Upon exposure to heat and other stress stimuli, activates gene transcription through binding to site-specific heat shock elements (HSEs) present in the promoter regions of target genes, such as the HSPs. Binds to inverted 5'-NGAAN-3' pentamer DNA sequences in HSEs. Involved in positive modulation of expression of heat shock protein hsp-16.2 in response to heat shock; may act in concert with homeodomain-interacting protein kinase hpk-1. In response to heat shock or starvation, required for the modulation of lifespan, and protection against aberrant protein aggregation proteotoxicity; may act in parallel with the Insulin/IGF-1-like signaling (IIS) mediated pathway. Plays a role in modulating autophagy, in response to a moderate and short-term heat shock, also known as a hormetic heat shock. Involved in positive modulation of ascaroside pheromone biosynthesis in response to heat shock, perhaps by directly activating transcription of peroxisomal fatty acid beta-oxidation genes. Required in modulating the response to infection by either Gram-negative or Gram-positive bacteria, perhaps acting via regulation of expression of Hsp90/daf-21 and members of the small heat shock protein (HSP20) family. May play a role downstream of the daf-16/FOXO and daf-2 signaling pathway in response to bacterial pathogens. Modulates expression of multiple microRNA genes, in both heat shock-dependent and -independent manner. Independent of heat shock, required to modulate expression of genes involved in larval development, mainly distinct from HSPs; acts in concert with putative transcription factor efl-1/E2F, which may form part of a multiprotein DRM complex. Independent of heat shock, involved in promoting death of the linker cell, a male-specific cell which guides the elongation of the gonad; perhaps acting by modulating expression of ubiquitin-conjugating enzyme let-70. Plays a role in egg-laying. This is Heat shock transcription factor hsf-1 from Caenorhabditis elegans.